The following is a 198-amino-acid chain: Probable GTP-binding protein EngB (198 aa).

The 163-residue stretch at 36–198 folds into the EngB-type G domain; the sequence is SDPQFAFIGR…NLSKLQELLE (163 aa). GTP is bound by residues 44 to 51, 70 to 74, 88 to 91, 155 to 158, and 182 to 184; these read GRSNVGKS, GRTQL, DLPG, NKID, and ISA. Ser-51 and Thr-72 together coordinate Mg(2+).

Belongs to the TRAFAC class TrmE-Era-EngA-EngB-Septin-like GTPase superfamily. EngB GTPase family. Mg(2+) serves as cofactor.

Its function is as follows. Necessary for normal cell division and for the maintenance of normal septation. This Mesomycoplasma hyopneumoniae (strain J / ATCC 25934 / NCTC 10110) (Mycoplasma hyopneumoniae) protein is Probable GTP-binding protein EngB.